The sequence spans 243 residues: Putative glycerophosphodiester phosphodiesterase YhdW (243 aa).

The GP-PDE domain occupies 1 to 238 (MYIIAHRGAS…DYPDFIIKDG (238 aa)). Residue His6 is the Proton acceptor of the active site. Residues Glu33 and Asp35 each coordinate Ca(2+). His48 (proton donor) is an active-site residue. Glu107 contacts Ca(2+).

The protein belongs to the glycerophosphoryl diester phosphodiesterase family. It depends on Ca(2+) as a cofactor.

The catalysed reaction is a sn-glycero-3-phosphodiester + H2O = an alcohol + sn-glycerol 3-phosphate + H(+). Its function is as follows. Glycerophosphodiester phosphodiesterase hydrolyzes glycerophosphodiesters into glycerol-3-phosphate (G3P) and the corresponding alcohol. In Bacillus subtilis (strain 168), this protein is Putative glycerophosphodiester phosphodiesterase YhdW (yhdW).